The sequence spans 609 residues: UvrABC system protein C (609 aa).

Residues 16–94 (SSPGVYRMYD…IKQYMPKYNV (79 aa)) enclose the GIY-YIG domain. Residues 203–238 (QQVMSVLVQKMEQASSDMRYEQAALYRDQITALRRV) form the UVR domain.

This sequence belongs to the UvrC family. In terms of assembly, interacts with UvrB in an incision complex.

The protein resides in the cytoplasm. Functionally, the UvrABC repair system catalyzes the recognition and processing of DNA lesions. UvrC both incises the 5' and 3' sides of the lesion. The N-terminal half is responsible for the 3' incision and the C-terminal half is responsible for the 5' incision. The protein is UvrABC system protein C of Shewanella pealeana (strain ATCC 700345 / ANG-SQ1).